The following is a 365-amino-acid chain: Succinyl-diaminopimelate desuccinylase (365 aa).

Residue His-65 participates in Zn(2+) binding. The active site involves Asp-67. Residue Asp-96 participates in Zn(2+) binding. Glu-126 serves as the catalytic Proton acceptor. Zn(2+) contacts are provided by Glu-127, Glu-155, and His-340.

The protein belongs to the peptidase M20A family. DapE subfamily. As to quaternary structure, homodimer. Zn(2+) is required as a cofactor. Requires Co(2+) as cofactor.

It carries out the reaction N-succinyl-(2S,6S)-2,6-diaminopimelate + H2O = (2S,6S)-2,6-diaminopimelate + succinate. It functions in the pathway amino-acid biosynthesis; L-lysine biosynthesis via DAP pathway; LL-2,6-diaminopimelate from (S)-tetrahydrodipicolinate (succinylase route): step 3/3. Its function is as follows. Catalyzes the hydrolysis of N-succinyl-L,L-diaminopimelic acid (SDAP), forming succinate and LL-2,6-diaminopimelate (DAP), an intermediate involved in the bacterial biosynthesis of lysine and meso-diaminopimelic acid, an essential component of bacterial cell walls. In Campylobacter jejuni subsp. jejuni serotype O:23/36 (strain 81-176), this protein is Succinyl-diaminopimelate desuccinylase.